Reading from the N-terminus, the 122-residue chain is Large ribosomal subunit protein uL14 (122 aa).

The protein belongs to the universal ribosomal protein uL14 family. As to quaternary structure, part of the 50S ribosomal subunit. Forms a cluster with proteins L3 and L19. In the 70S ribosome, L14 and L19 interact and together make contacts with the 16S rRNA in bridges B5 and B8.

Its function is as follows. Binds to 23S rRNA. Forms part of two intersubunit bridges in the 70S ribosome. This is Large ribosomal subunit protein uL14 from Cupriavidus taiwanensis (strain DSM 17343 / BCRC 17206 / CCUG 44338 / CIP 107171 / LMG 19424 / R1) (Ralstonia taiwanensis (strain LMG 19424)).